The primary structure comprises 752 residues: MSQPDQEAQALAAGFSADAAKTRLAELAKRLSDANTAYHAADAPDLSDADYDALKRENAAIEAAFPDLKRADSPSDQVGAAPAEGFSKLTHTQRMLSLANAFDAGDVPDFVAGIRRYLNLGAEADLPFTAEPKIDGLSLSLRYEDGQLVSAATRGDGAIGENVTANARTIDDIPQTLTDAPDVLEVRGEVYMSHADFAALNDRQAEAGAKTFANPRNAAAGSLRQLDASITRSRPLRFFAYAWGEVSAPLAATQSGALNTLKTLGFQINDRTKTCHSAEDMLAHYASIEQDRADLGYDIDGVVYKIDDLDYQRRLGMRSTTPRWAIAHKFPAELAWTTLEAIDIQVGRTGALSPVARLTPVTVGGVVVSNATLHNEDYIAGRDANGGPIRDGKDIRVGDRVQVYRAGDVIPKVADVDLAKRPENTAKYAFPDHCPQCQSEAIREEGDAVRRCTGGLICPAQAVEKLKHFVSRAAFDIDGLGAKQVEAFYLDGWIAEPADIFRLKENYGEGMKQLRNREGWGEKSATSLFNAIDDKRSIALHRLIFALGIRHVGEVAASDLARHFTTWKALAEIVDQAAPAAEAHRRAEDAVLAERKAAADEGRRASLQPQRDKAWADTPEPAKAAWDDLTGIDGIGATVAVSLVTTFQQARERASIDRLITELTDIQPPEARATQSAVAGLTVVFTGALERMTRAEAKARAEAMGAKVSGSVSAKTDIVVAGPGAGSKEKKAKDLGIELLTEEQWLDRIGDA.

Residues 48–52 (DADYD), 97–98 (SL), and E131 contribute to the NAD(+) site. Catalysis depends on K133, which acts as the N6-AMP-lysine intermediate. 4 residues coordinate NAD(+): R154, E189, K305, and K329. 4 residues coordinate Zn(2+): C434, C437, C452, and C458. Residues 599-615 (ADEGRRASLQPQRDKAW) show a composition bias toward basic and acidic residues. The interval 599–618 (ADEGRRASLQPQRDKAWADT) is disordered. The BRCT domain maps to 673 to 752 (ATQSAVAGLT…EQWLDRIGDA (80 aa)).

Belongs to the NAD-dependent DNA ligase family. LigA subfamily. Mg(2+) serves as cofactor. Requires Mn(2+) as cofactor.

It catalyses the reaction NAD(+) + (deoxyribonucleotide)n-3'-hydroxyl + 5'-phospho-(deoxyribonucleotide)m = (deoxyribonucleotide)n+m + AMP + beta-nicotinamide D-nucleotide.. In terms of biological role, DNA ligase that catalyzes the formation of phosphodiester linkages between 5'-phosphoryl and 3'-hydroxyl groups in double-stranded DNA using NAD as a coenzyme and as the energy source for the reaction. It is essential for DNA replication and repair of damaged DNA. In Jannaschia sp. (strain CCS1), this protein is DNA ligase.